The following is an 892-amino-acid chain: Alanine--tRNA ligase (892 aa).

Zn(2+) contacts are provided by histidine 593, histidine 597, cysteine 694, and histidine 698.

This sequence belongs to the class-II aminoacyl-tRNA synthetase family. Zn(2+) serves as cofactor.

It is found in the cytoplasm. It catalyses the reaction tRNA(Ala) + L-alanine + ATP = L-alanyl-tRNA(Ala) + AMP + diphosphate. In terms of biological role, catalyzes the attachment of alanine to tRNA(Ala) in a two-step reaction: alanine is first activated by ATP to form Ala-AMP and then transferred to the acceptor end of tRNA(Ala). Also edits incorrectly charged Ser-tRNA(Ala) and Gly-tRNA(Ala) via its editing domain. This Helicobacter hepaticus (strain ATCC 51449 / 3B1) protein is Alanine--tRNA ligase.